Reading from the N-terminus, the 402-residue chain is Lipid-A-disaccharide synthase (402 aa).

Belongs to the LpxB family.

It catalyses the reaction a lipid X + a UDP-2-N,3-O-bis[(3R)-3-hydroxyacyl]-alpha-D-glucosamine = a lipid A disaccharide + UDP + H(+). The protein operates within bacterial outer membrane biogenesis; LPS lipid A biosynthesis. Condensation of UDP-2,3-diacylglucosamine and 2,3-diacylglucosamine-1-phosphate to form lipid A disaccharide, a precursor of lipid A, a phosphorylated glycolipid that anchors the lipopolysaccharide to the outer membrane of the cell. In Cupriavidus pinatubonensis (strain JMP 134 / LMG 1197) (Cupriavidus necator (strain JMP 134)), this protein is Lipid-A-disaccharide synthase.